We begin with the raw amino-acid sequence, 424 residues long: Phosphomethylpyrimidine synthase 2 (424 aa).

Residues Asn65, Met94, Tyr123, His162, 184–186 (SRG), 225–228 (DGLR), and Glu264 each bind substrate. His268 contributes to the Zn(2+) binding site. Residue Tyr291 participates in substrate binding. Zn(2+) is bound at residue His332. 3 residues coordinate [4Fe-4S] cluster: Cys408, Cys411, and Cys415.

This sequence belongs to the ThiC family. [4Fe-4S] cluster is required as a cofactor.

It catalyses the reaction 5-amino-1-(5-phospho-beta-D-ribosyl)imidazole + S-adenosyl-L-methionine = 4-amino-2-methyl-5-(phosphooxymethyl)pyrimidine + CO + 5'-deoxyadenosine + formate + L-methionine + 3 H(+). Its pathway is cofactor biosynthesis; thiamine diphosphate biosynthesis. Functionally, catalyzes the synthesis of the hydroxymethylpyrimidine phosphate (HMP-P) moiety of thiamine from aminoimidazole ribotide (AIR) in a radical S-adenosyl-L-methionine (SAM)-dependent reaction. The protein is Phosphomethylpyrimidine synthase 2 of Methanothermobacter thermautotrophicus (strain ATCC 29096 / DSM 1053 / JCM 10044 / NBRC 100330 / Delta H) (Methanobacterium thermoautotrophicum).